The primary structure comprises 142 residues: MKTFTAKPETVKRDWYVVDATGKTLGRLATELARRLRGKHKAEYTPHVDTGDYIIVLNADKVAVTGNKRTDKVYYHHTGHIGGIKQATFEEMIARRPERVIEIAVKGMLPKGPLGRAMSRKLKVYAGNEHNHAAQQPQVLDI.

It belongs to the universal ribosomal protein uL13 family. In terms of assembly, part of the 50S ribosomal subunit.

In terms of biological role, this protein is one of the early assembly proteins of the 50S ribosomal subunit, although it is not seen to bind rRNA by itself. It is important during the early stages of 50S assembly. The chain is Large ribosomal subunit protein uL13 from Shigella dysenteriae serotype 1 (strain Sd197).